The sequence spans 374 residues: uncharacterized protein (374 aa).

A coiled-coil region spans residues 39-66 (RDVRKHLESRDAKQELIDSLEEAVRDSR).

This is an uncharacterized protein from Mycobacterium tuberculosis (strain CDC 1551 / Oshkosh).